The sequence spans 189 residues: MFWLLALLAYLLGSLSFAIVLSRLSGSPDPRSSGSGNAGATNMLRLAGRKLAILTLLGDLCKGLLPVLLARVAGLDLHAQAWVGICAVLGHLFPLYFRFKGGKGVATAAGMLMGLYFPAALLAIGAWLLTFYLTRTSSLAALIATPLTLPLLAWREPEALLPISVLTVMIVWRHRNNLRDLFAGRERHF.

A run of 5 helical transmembrane segments spans residues 1–21 (MFWL…AIVL), 50–70 (KLAI…VLLA), 77–97 (LHAQ…PLYF), 111–131 (MLMG…LLTF), and 151–171 (LLAW…VMIV).

Belongs to the PlsY family. As to quaternary structure, probably interacts with PlsX.

It localises to the cell inner membrane. The enzyme catalyses an acyl phosphate + sn-glycerol 3-phosphate = a 1-acyl-sn-glycero-3-phosphate + phosphate. Its pathway is lipid metabolism; phospholipid metabolism. Catalyzes the transfer of an acyl group from acyl-phosphate (acyl-PO(4)) to glycerol-3-phosphate (G3P) to form lysophosphatidic acid (LPA). This enzyme utilizes acyl-phosphate as fatty acyl donor, but not acyl-CoA or acyl-ACP. The polypeptide is Glycerol-3-phosphate acyltransferase (Pseudomonas putida (strain ATCC 700007 / DSM 6899 / JCM 31910 / BCRC 17059 / LMG 24140 / F1)).